The sequence spans 293 residues: SAGA-associated factor 29 (293 aa).

Positions 3–88 (LVSADSRIAE…KALDKIAEIK (86 aa)) form a coiled coil. The SGF29 C-terminal domain maps to 152–293 (GDYVAKPGDK…VVACKEPKKK (142 aa)). 2 histone H3K4me3 N-terminus binding regions span residues 194 to 196 (DID) and 240 to 243 (QTTC). The histone H3K4me3 binding stretch occupies residues 264 to 266 (FED). Lysine 288 carries the N6-acetyllysine modification.

Belongs to the SGF29 family. Interacts with dimethylated and trimethylated 'Lys-4' of histone H3 (H3K4me2 and H3K4me3), with a preference for the trimethylated form (H3K4me3). Component of some SAGA-type complexes. Component of the ADA2A-containing complex (ATAC), composed of KAT14, KAT2A, TADA2L, TADA3L, ZZ3, MBIP, WDR5, YEATS2, CCDC101 and DR1. Interacts with (methylated) CGAS. Interacts with TADA3L, GCN5L2, SUPT3H and MYC. As to expression, widely expressed with highest levels in testis. Highly expressed in hepatoma and other tumor cell lines.

Its subcellular location is the nucleus. Its function is as follows. Chromatin reader component of some histone acetyltransferase (HAT) SAGA-type complexes like the TFTC-HAT, ATAC or STAGA complexes. SGF29 specifically recognizes and binds methylated 'Lys-4' of histone H3 (H3K4me), with a preference for trimethylated form (H3K4me3). In the SAGA-type complexes, SGF29 is required to recruit complexes to H3K4me. Involved in the response to endoplasmic reticulum (ER) stress by recruiting the SAGA complex to H3K4me, thereby promoting histone H3 acetylation and cell survival. Also binds non-histone proteins that are methylated on Lys residues: specifically recognizes and binds CGAS monomethylated on 'Lys-491'. May be involved in MYC-mediated oncogenic transformation. The protein is SAGA-associated factor 29 of Rattus norvegicus (Rat).